Here is a 185-residue protein sequence, read N- to C-terminus: Adenine phosphoribosyltransferase (185 aa).

The protein belongs to the purine/pyrimidine phosphoribosyltransferase family. As to quaternary structure, homodimer.

The protein resides in the cytoplasm. The catalysed reaction is AMP + diphosphate = 5-phospho-alpha-D-ribose 1-diphosphate + adenine. It participates in purine metabolism; AMP biosynthesis via salvage pathway; AMP from adenine: step 1/1. In terms of biological role, catalyzes a salvage reaction resulting in the formation of AMP, that is energically less costly than de novo synthesis. The chain is Adenine phosphoribosyltransferase from Corynebacterium glutamicum (strain ATCC 13032 / DSM 20300 / JCM 1318 / BCRC 11384 / CCUG 27702 / LMG 3730 / NBRC 12168 / NCIMB 10025 / NRRL B-2784 / 534).